A 334-amino-acid chain; its full sequence is Glyceraldehyde-3-phosphate dehydrogenase (334 aa).

NAD(+) is bound by residues 12–13 (TI) and glycine 111. 140–142 (SCN) contributes to the D-glyceraldehyde 3-phosphate binding site. The Nucleophile role is filled by cysteine 141. Position 167 (arginine 167) interacts with NAD(+). 192 to 193 (HG) is a binding site for D-glyceraldehyde 3-phosphate. Glutamine 298 is an NAD(+) binding site.

The protein belongs to the glyceraldehyde-3-phosphate dehydrogenase family. In terms of assembly, homotetramer.

The protein localises to the encapsulin nanocompartment. It catalyses the reaction D-glyceraldehyde 3-phosphate + phosphate + NADP(+) = (2R)-3-phospho-glyceroyl phosphate + NADPH + H(+). It carries out the reaction D-glyceraldehyde 3-phosphate + phosphate + NAD(+) = (2R)-3-phospho-glyceroyl phosphate + NADH + H(+). It functions in the pathway carbohydrate degradation; glycolysis; pyruvate from D-glyceraldehyde 3-phosphate: step 1/5. Possible cargo protein of a type 4B encapsulin nanocompartment. Active in the presence of NAD and NADP, prefers NADP. The chain is Glyceraldehyde-3-phosphate dehydrogenase (gap) from Pyrococcus furiosus (strain ATCC 43587 / DSM 3638 / JCM 8422 / Vc1).